Reading from the N-terminus, the 732-residue chain is MTKAQFYIEGMTCSACSSGIERALGRKKFVQEVGVDLISKKAFVVYDENQASLEDVFKQIEKLGYQPRVATDTPNTFLNPSFLTPNVKLALVLLGTLGVLALSMFAPLLPLPSFLKNPFINGIVQLVLSLMVMHMGRNFYVHGFKALWARQPNMDSLIALGTSAALLYSLVLLFRAYTHAPIEGYYFESVCVILLFVMAGKRVEENSKDKALEAMQSLMRHQSLNALKIENGQSVEVPLESLQKGDILQILPGSYIPVDGVLFKGEAEVDESMLSGESLPVYKKEGMDLFAGTLNTTTTFQMRATHTKAQSTLAKILTLIAKAQGSKAPIARLADKVAGVFVPIVIGIASIAFLVWLVLGDFTRALEVFIAILVISCPCALGLATPMALLVAQKEASLLGLFFKDAVSLEKAKNVNHVIFDKTGTLTLGTPLVQEVRVAEGVDRLELLTLCASLEAQSEHVIAKGIVAHAKEQGIALQEVQEVQAKPGFGIKGVVGDQIIKAGNLEFFNLPNPFGTLEGIQVFVGTETQILGVVVLADSLKEGSKEAISELKALGVKTTLLSGDNLENVRALATQLGIQDYHAQAKPEDKLKVIQELKAQGKVVMMVGDGVNDAPSLALSDVGVVMAKGSDASLEVADVVSFNNDIQSVVSAMKLSALTIANIKQNLFWAFCYNSIAIPLACGVAYKLGIMFNPMLASLAMSLSSVSVVLNAQRLRGAHFKIRGSHENRHSS.

Topologically, residues 1–88 are cytoplasmic; it reads MTKAQFYIEG…NPSFLTPNVK (88 aa). The HMA domain maps to 2-68; it reads TKAQFYIEGM…QIEKLGYQPR (67 aa). Cu(+)-binding residues include cysteine 13 and cysteine 16. A helical membrane pass occupies residues 89–109; it reads LALVLLGTLGVLALSMFAPLL. Residues 110–122 lie on the Extracellular side of the membrane; that stretch reads PLPSFLKNPFING. A helical membrane pass occupies residues 123 to 142; it reads IVQLVLSLMVMHMGRNFYVH. The Cytoplasmic segment spans residues 143–149; it reads GFKALWA. A helical membrane pass occupies residues 150-170; sequence RQPNMDSLIALGTSAALLYSL. Residues 171-187 lie on the Extracellular side of the membrane; that stretch reads VLLFRAYTHAPIEGYYF. The chain crosses the membrane as a helical span at residues 188 to 208; that stretch reads ESVCVILLFVMAGKRVEENSK. The Cytoplasmic portion of the chain corresponds to 209-336; sequence DKALEAMQSL…KAPIARLADK (128 aa). Residues 337–359 form a helical membrane-spanning segment; it reads VAGVFVPIVIGIASIAFLVWLVL. At 360–365 the chain is on the extracellular side; that stretch reads GDFTRA. The chain crosses the membrane as a helical span at residues 366 to 383; that stretch reads LEVFIAILVISCPCALGL. Residues 384–663 are Cytoplasmic-facing; sequence ATPMALLVAQ…KLSALTIANI (280 aa). Aspartate 421 acts as the 4-aspartylphosphate intermediate in catalysis. Mg(2+) is bound by residues aspartate 609 and aspartate 613. Residues 664-683 traverse the membrane as a helical segment; that stretch reads KQNLFWAFCYNSIAIPLACG. The Extracellular portion of the chain corresponds to 684-694; the sequence is VAYKLGIMFNP. Residues 695 to 713 traverse the membrane as a helical segment; sequence MLASLAMSLSSVSVVLNAQ. Over 714 to 732 the chain is Cytoplasmic; that stretch reads RLRGAHFKIRGSHENRHSS.

Belongs to the cation transport ATPase (P-type) (TC 3.A.3) family. Type IB subfamily.

Its subcellular location is the cell membrane. It catalyses the reaction Cu(+)(in) + ATP + H2O = Cu(+)(out) + ADP + phosphate + H(+). In terms of biological role, probably involved in copper export. The polypeptide is Copper-transporting ATPase (copA) (Helicobacter felis (strain ATCC 49179 / CCUG 28539 / NCTC 12436 / CS1)).